Consider the following 406-residue polypeptide: Cysteine desulfurase (406 aa).

Lys-226 carries the post-translational modification N6-(pyridoxal phosphate)lysine. Residue Cys-364 is the Cysteine persulfide intermediate of the active site.

Belongs to the class-V pyridoxal-phosphate-dependent aminotransferase family. Csd subfamily. As to quaternary structure, homodimer. Interacts with SufE and the SufBCD complex composed of SufB, SufC and SufD. The interaction with SufE is required to mediate the direct transfer of the sulfur atom from the S-sulfanylcysteine. Requires pyridoxal 5'-phosphate as cofactor.

The protein resides in the cytoplasm. It carries out the reaction (sulfur carrier)-H + L-cysteine = (sulfur carrier)-SH + L-alanine. The enzyme catalyses L-selenocysteine + AH2 = hydrogenselenide + L-alanine + A + H(+). Its pathway is cofactor biosynthesis; iron-sulfur cluster biosynthesis. Its function is as follows. Cysteine desulfurases mobilize the sulfur from L-cysteine to yield L-alanine, an essential step in sulfur metabolism for biosynthesis of a variety of sulfur-containing biomolecules. Component of the suf operon, which is activated and required under specific conditions such as oxidative stress and iron limitation. Acts as a potent selenocysteine lyase in vitro, that mobilizes selenium from L-selenocysteine. Selenocysteine lyase activity is however unsure in vivo. This Escherichia coli O6:K15:H31 (strain 536 / UPEC) protein is Cysteine desulfurase.